Reading from the N-terminus, the 142-residue chain is Putative pre-16S rRNA nuclease (142 aa).

The protein belongs to the YqgF nuclease family.

It is found in the cytoplasm. Could be a nuclease involved in processing of the 5'-end of pre-16S rRNA. The polypeptide is Putative pre-16S rRNA nuclease (Mesoplasma florum (strain ATCC 33453 / NBRC 100688 / NCTC 11704 / L1) (Acholeplasma florum)).